The sequence spans 940 residues: Gamma-aminobutyric acid type B receptor subunit 2 (940 aa).

Residues 1-40 (MASPPSSGQPRPPPPPPPPARLLLPLLLSLLLWLAPGAWG) form the signal peptide. At 41-482 (WTRGAPRPPP…LRKISLPLYS (442 aa)) the chain is on the extracellular side. Residue Asn89 is glycosylated (N-linked (GlcNAc...) asparagine). Intrachain disulfides connect Cys107–Cys134, Cys236–Cys265, and Cys264–Cys301. Residues Asn297, Asn388, Asn403, and Asn452 are each glycosylated (N-linked (GlcNAc...) asparagine). Residues 483 to 503 (ILSALTILGMIMASAFLFFNI) form a helical membrane-spanning segment. Topologically, residues 504–521 (KNRNQKLIKMSSPYMNNL) are cytoplasmic. A helical transmembrane segment spans residues 522–542 (IILGGMLSYASIFLFGLDGSF). The Extracellular segment spans residues 543–550 (VSEKTFET). The chain crosses the membrane as a helical span at residues 551–571 (LCTVRTWILTVGYTTAFGAMF). The Cytoplasmic segment spans residues 572–596 (AKTWRVHAIFKNVKMKKKIIKDQKL). The helical transmembrane segment at 597-617 (LVIVGGMLLIDLCILICWQAV) threads the bilayer. Residues 618 to 653 (DPLRRTVERYSMEPDPAGRDISIRPLLEHCENTHMT) are Extracellular-facing. Residues 654 to 674 (IWLGIVYAYKGLLMLFGCFLA) form a helical membrane-spanning segment. Residues 675–690 (WETRNVSIPALNDSKY) lie on the Cytoplasmic side of the membrane. A helical membrane pass occupies residues 691 to 711 (IGMSVYNVGIMCIIGAAVSFL). Topologically, residues 712–719 (TRDQPNVQ) are extracellular. A helical membrane pass occupies residues 720 to 740 (FCIVALVIIFCSTITLCLVFV). Topologically, residues 741–940 (PKLITLRTNP…PSFRVMVSGL (200 aa)) are cytoplasmic. Residues 762–789 (TQNQKKEDSKTSTSVTSVNQASTSRLEG) are disordered. A compositionally biased stretch (polar residues) spans 772–786 (TSTSVTSVNQASTSR). 2 positions are modified to phosphoserine: Ser775 and Ser778. Positions 780 to 818 (NQASTSRLEGLQSENHRLRMKITELDKDLEEVTMQLQDT) form a coiled coil. Position 818 is a phosphothreonine (Thr818). Phosphoserine is present on residues Ser883, Ser892, Ser912, Ser915, Ser919, and Ser923.

Belongs to the G-protein coupled receptor 3 family. GABA-B receptor subfamily. In terms of assembly, heterodimer of GABBR1 and GABBR2. Homodimers may form, but are inactive. Interacts (via C-terminus) with ATF4 (via leucine zipper domain). Interacts with KCTD8, KCTD12 and KCTD16; this interaction determines the pharmacology and kinetics of the receptor response, the KCTD proteins markedly accelerating the GABA-B response, although to different extents. Highly expressed in areas of the brain including thalamic nuclei, the hippocampus, cerebellar Purkinje cells and the medial habenula, and moderately expressed in the cerebral cortex, certain anterioventral thalamic nuclei, dorsal medial hypothalamic nucleus and suprachiasmatic nuclei. Also weakly expressed in the testis.

The protein resides in the cell membrane. It is found in the postsynaptic cell membrane. Its subcellular location is the perikaryon. The protein localises to the cell projection. It localises to the dendrite. Functionally, component of a heterodimeric G-protein coupled receptor for GABA, formed by GABBR1 and GABBR2. Within the heterodimeric GABA receptor, only GABBR1 seems to bind agonists, while GABBR2 mediates coupling to G proteins. Ligand binding causes a conformation change that triggers signaling via guanine nucleotide-binding proteins (G proteins) and modulates the activity of down-stream effectors, such as adenylate cyclase. Signaling inhibits adenylate cyclase, stimulates phospholipase A2, activates potassium channels, inactivates voltage-dependent calcium-channels and modulates inositol phospholipid hydrolysis. Plays a critical role in the fine-tuning of inhibitory synaptic transmission. Pre-synaptic GABA receptor inhibits neurotransmitter release by down-regulating high-voltage activated calcium channels, whereas postsynaptic GABA receptor decreases neuronal excitability by activating a prominent inwardly rectifying potassium (Kir) conductance that underlies the late inhibitory postsynaptic potentials. Not only implicated in synaptic inhibition but also in hippocampal long-term potentiation, slow wave sleep, muscle relaxation and antinociception. In Rattus norvegicus (Rat), this protein is Gamma-aminobutyric acid type B receptor subunit 2 (Gabbr2).